The chain runs to 125 residues: Small ribosomal subunit protein uS12 (125 aa).

Aspartate 89 carries the 3-methylthioaspartic acid modification.

The protein belongs to the universal ribosomal protein uS12 family. In terms of assembly, part of the 30S ribosomal subunit. Contacts proteins S8 and S17. May interact with IF1 in the 30S initiation complex.

In terms of biological role, with S4 and S5 plays an important role in translational accuracy. Its function is as follows. Interacts with and stabilizes bases of the 16S rRNA that are involved in tRNA selection in the A site and with the mRNA backbone. Located at the interface of the 30S and 50S subunits, it traverses the body of the 30S subunit contacting proteins on the other side and probably holding the rRNA structure together. The combined cluster of proteins S8, S12 and S17 appears to hold together the shoulder and platform of the 30S subunit. The sequence is that of Small ribosomal subunit protein uS12 from Bordetella avium (strain 197N).